The following is a 79-amino-acid chain: Cytoinsectotoxin-3 (79 aa).

This sequence belongs to the cationic peptide 06 (cytoinsectotoxin) family. As to expression, expressed by the venom gland.

It is found in the secreted. Insecticidal and antimicrobial peptide. Has insecticidal activity against larvae of flesh fly S.carnaria. Has antibacterial activity against Gram-positive bacterium B.subtilis B-501 (MIC=0.63 uM) and Gram-negative bacterium E.coli DH5alpha (MIC=2.5 uM). This chain is Cytoinsectotoxin-3, found in Lachesana tarabaevi (Spider).